A 93-amino-acid polypeptide reads, in one-letter code: Large ribosomal subunit protein uL23cz/uL23cy (93 aa).

This sequence belongs to the universal ribosomal protein uL23 family. In terms of assembly, part of the 50S ribosomal subunit.

The protein localises to the plastid. It is found in the chloroplast. Its function is as follows. Binds to 23S rRNA. This is Large ribosomal subunit protein uL23cz/uL23cy (rpl23-A) from Drimys granadensis.